Reading from the N-terminus, the 212-residue chain is 3-oxo-tetronate 4-phosphate decarboxylase (212 aa).

Catalysis depends on Glu-79, which acts as the Proton acceptor. Positions 79, 98, and 100 each coordinate Zn(2+). Tyr-125 functions as the Proton donor in the catalytic mechanism. His-165 contributes to the Zn(2+) binding site.

Belongs to the aldolase class II family. AraD/FucA subfamily. The cofactor is Zn(2+).

The catalysed reaction is 3-dehydro-4-O-phospho-D-erythronate + H(+) = dihydroxyacetone phosphate + CO2. It carries out the reaction 3-dehydro-4-O-phospho-L-erythronate + H(+) = dihydroxyacetone phosphate + CO2. Functionally, catalyzes the decarboxylation of 3-oxo-tetronate 4-phosphate to dihydroxyacetone phosphate (DHAP) and CO(2). The sequence is that of 3-oxo-tetronate 4-phosphate decarboxylase from Escherichia coli O6:H1 (strain CFT073 / ATCC 700928 / UPEC).